A 211-amino-acid chain; its full sequence is Methylthioribulose-1-phosphate dehydratase (211 aa).

Histidine 97 and histidine 99 together coordinate Zn(2+).

This sequence belongs to the aldolase class II family. MtnB subfamily. In terms of assembly, homotetramer. The cofactor is Zn(2+).

The catalysed reaction is 5-(methylsulfanyl)-D-ribulose 1-phosphate = 5-methylsulfanyl-2,3-dioxopentyl phosphate + H2O. It functions in the pathway amino-acid biosynthesis; L-methionine biosynthesis via salvage pathway; L-methionine from S-methyl-5-thio-alpha-D-ribose 1-phosphate: step 2/6. Functionally, catalyzes the dehydration of methylthioribulose-1-phosphate (MTRu-1-P) into 2,3-diketo-5-methylthiopentyl-1-phosphate (DK-MTP-1-P). The sequence is that of Methylthioribulose-1-phosphate dehydratase from Geobacillus thermodenitrificans (strain NG80-2).